The following is a 334-amino-acid chain: MTKVAINGFGRIGRLALRRILEVPGLEVVAINDLTDAKMLAHLFKYDSSQGRFNGEIEVKEGAFVVNGKEVKVFAEADPEKLPWGELGIDVVLECTGFFTKKEKAEAHVRAGAKKVVISAPAGNDLKTIVFNVNNEDLDGTETVISGASCTTNCLAPMAKVLNDKFGIEKGFMTTIHAYTNDQNTLDGPHRKGDFRRARAAAVSIIPNSTGAAKAIAQVIPELKGKLDGNAQRVPVPTGSVTELISVLKKNVTVEEINAAMKEAANESFGYTEDEIVSADVVGISYGSLFDATLTKIVDVDGSQLVKTVSWYDNEMSYTSQLVRTLEYFAKIAK.

Residues 11–12 (RI), aspartate 33, and serine 119 contribute to the NAD(+) site. Residues 149-151 (SCT) and threonine 180 each bind D-glyceraldehyde 3-phosphate. Cysteine 150 (nucleophile) is an active-site residue. NAD(+) is bound at residue asparagine 181. Residues arginine 197, 210 to 211 (TG), and arginine 233 contribute to the D-glyceraldehyde 3-phosphate site. Position 314 (asparagine 314) interacts with NAD(+).

The protein belongs to the glyceraldehyde-3-phosphate dehydrogenase family. In terms of assembly, homotetramer.

It localises to the cytoplasm. It catalyses the reaction D-glyceraldehyde 3-phosphate + phosphate + NAD(+) = (2R)-3-phospho-glyceroyl phosphate + NADH + H(+). It functions in the pathway carbohydrate degradation; glycolysis; pyruvate from D-glyceraldehyde 3-phosphate: step 1/5. In terms of biological role, catalyzes the oxidative phosphorylation of glyceraldehyde 3-phosphate (G3P) to 1,3-bisphosphoglycerate (BPG) using the cofactor NAD. The first reaction step involves the formation of a hemiacetal intermediate between G3P and a cysteine residue, and this hemiacetal intermediate is then oxidized to a thioester, with concomitant reduction of NAD to NADH. The reduced NADH is then exchanged with the second NAD, and the thioester is attacked by a nucleophilic inorganic phosphate to produce BPG. This Clostridium pasteurianum protein is Glyceraldehyde-3-phosphate dehydrogenase (gap).